A 230-amino-acid chain; its full sequence is Enolase-phosphatase E1 (230 aa).

This sequence belongs to the HAD-like hydrolase superfamily. MasA/MtnC family. In terms of assembly, monomer. Mg(2+) serves as cofactor.

The enzyme catalyses 5-methylsulfanyl-2,3-dioxopentyl phosphate + H2O = 1,2-dihydroxy-5-(methylsulfanyl)pent-1-en-3-one + phosphate. The protein operates within amino-acid biosynthesis; L-methionine biosynthesis via salvage pathway; L-methionine from S-methyl-5-thio-alpha-D-ribose 1-phosphate: step 3/6. It functions in the pathway amino-acid biosynthesis; L-methionine biosynthesis via salvage pathway; L-methionine from S-methyl-5-thio-alpha-D-ribose 1-phosphate: step 4/6. In terms of biological role, bifunctional enzyme that catalyzes the enolization of 2,3-diketo-5-methylthiopentyl-1-phosphate (DK-MTP-1-P) into the intermediate 2-hydroxy-3-keto-5-methylthiopentenyl-1-phosphate (HK-MTPenyl-1-P), which is then dephosphorylated to form the acireductone 1,2-dihydroxy-3-keto-5-methylthiopentene (DHK-MTPene). The chain is Enolase-phosphatase E1 from Bradyrhizobium sp. (strain BTAi1 / ATCC BAA-1182).